A 346-amino-acid chain; its full sequence is Phosphate acyltransferase (346 aa).

The protein belongs to the PlsX family. In terms of assembly, homodimer. Probably interacts with PlsY.

Its subcellular location is the cytoplasm. The catalysed reaction is a fatty acyl-[ACP] + phosphate = an acyl phosphate + holo-[ACP]. It participates in lipid metabolism; phospholipid metabolism. Catalyzes the reversible formation of acyl-phosphate (acyl-PO(4)) from acyl-[acyl-carrier-protein] (acyl-ACP). This enzyme utilizes acyl-ACP as fatty acyl donor, but not acyl-CoA. In Brucella abortus (strain S19), this protein is Phosphate acyltransferase.